Here is a 315-residue protein sequence, read N- to C-terminus: GTP cyclohydrolase MptA (315 aa).

Belongs to the GTP cyclohydrolase IV family. In terms of assembly, homodimer. Fe(2+) serves as cofactor.

It catalyses the reaction GTP + H2O = 7,8-dihydroneopterin 2',3'-cyclic phosphate + formate + diphosphate + H(+). It participates in cofactor biosynthesis; 5,6,7,8-tetrahydromethanopterin biosynthesis. Converts GTP to 7,8-dihydro-D-neopterin 2',3'-cyclic phosphate, the first intermediate in the biosynthesis of coenzyme methanopterin. In Methanococcus maripaludis (strain DSM 14266 / JCM 13030 / NBRC 101832 / S2 / LL), this protein is GTP cyclohydrolase MptA.